The sequence spans 122 residues: Large ribosomal subunit protein uL14c (122 aa).

The protein belongs to the universal ribosomal protein uL14 family. In terms of assembly, part of the 50S ribosomal subunit.

The protein resides in the plastid. The protein localises to the chloroplast. In terms of biological role, binds to 23S rRNA. This chain is Large ribosomal subunit protein uL14c, found in Zygnema circumcarinatum (Green alga).